A 378-amino-acid polypeptide reads, in one-letter code: Stimulator of interferon genes protein (378 aa).

The Cytoplasmic portion of the chain corresponds to 1 to 17 (MPHSSLHPSIPQPRGLR). The interval 1–190 (MPHSSLHPSI…IYNQFHNNTL (190 aa)) is mediates interaction with ZDHHC1 and ZDHHC11. A helical membrane pass occupies residues 18-34 (AQKAALVLLSACLVALW). Residues 35–44 (GLGEPPDYTL) lie on the Lumenal side of the membrane. A helical transmembrane segment spans residues 45-69 (KWLVLHLASQQMGLLIKGICSLAEE). Residues 70 to 91 (LCHVHSRYHGSYWRAVRACLCS) are Cytoplasmic-facing. Residue Cys88 is the site of S-palmitoyl cysteine attachment. The helical transmembrane segment at 92–106 (SMRCGALLLLSCYFY) threads the bilayer. Residues 107–116 (CSLPNMADLP) lie on the Lumenal side of the membrane. A helical transmembrane segment spans residues 117-134 (FTWMLALLGLSQALNILL). The Cytoplasmic segment spans residues 135–378 (GLQGLAPAEV…KPLPLRSDVF (244 aa)). Lys150 participates in a covalent cross-link: Glycyl lysine isopeptide (Lys-Gly) (interchain with G-Cter in ubiquitin). The interval 153 to 339 (FNVAHGLAWS…LQHLRQEERE (187 aa)) is cyclic dinucleotide-binding domain (CBD). Residues Ser162 and Tyr167 each contribute to the 2',3'-cGAMP site. Ser162 and Tyr167 together coordinate 3',3'-c-di-GMP. 2',3'-cUAMP is bound at residue Tyr167. A Glycyl lysine isopeptide (Lys-Gly) (interchain with G-Cter in ubiquitin) cross-link involves residue Lys236. The 2',3'-cGAMP site is built by Arg238 and Thr263. Arg238 and Thr263 together coordinate 2',3'-cUAMP. Residues 238–241 (RVYT) and Thr263 each bind 3',3'-c-di-GMP. The tract at residues 339–378 (EVTMGSTETSVMPGSSVLSQEPELLISGLEKPLPLRSDVF) is C-terminal tail (CTT). A Phosphoserine modification is found at Ser354. Residues Ser357 and Ser365 each carry the phosphoserine; by TBK1 modification. Positions 362–365 (LLIS) match the pLxIS motif motif.

It belongs to the STING family. Homodimer; forms a homodimer in absence of cyclic nucleotide (c-di-GMP or cGAMP); 'Lys-63'-linked ubiquitination at Lys-150 is required for homodimerization. Homotetramer; in presence of cyclic nucleotide (c-di-GMP or cGAMP), forms tetramers and higher-order oligomers through side-by-side packing. Interacts (when phosphorylated) with IRF3; following activation and phosphorylation on the pLxIS motif by TBK1, recruits IRF3. Interacts with RIGI, MAVS and SSR2. Interacts with RNF5 and TRIM56. Interacts with TBK1; when homodimer, leading to subsequent production of IFN-beta. Interacts with IFIT1 and IFIT2. Interacts with TRIM29; this interaction induces STING1 ubiquitination and subsequent degradation. Associates with the MHC-II complex. Interacts with STEEP1; interaction takes place upon cGAMP-activation and STING1 phosphorylation by MAP3K7/TAK1 and promotes STING1 translocation to COPII vesicles. Interacts with SEC24A, SEC24B and SEC24C; promoting translocation to COPII vesicles. Interacts (when ubiquitinated) with SQSTM1; leading to relocalization to autophagosomes. Interacts with SURF4. Interacts with HNRNPA2B1. Interacts with ZDHHC1; ZDHHC1 constitutively interacts with STING1 and in presence of DNA viruses activates it by promoting its cGAMP-induced oligomerization and the recruitment of downstream signaling components. Interacts with ZDHHC11; in presence of DNA viruses promotes the recruitment of IRF3 to STING1. Interacts with TOMM70. Interacts with TAB1; promoting recruitment of TAB1 to the endoplasmic reticulum membrane and subsequent activation of MAP3K7/TAK1. Interacts (via transmembrane domain) with TMEM203. Interacts with DDX41. In terms of processing, phosphorylation by TBK1 leads to activation and production of IFN-beta. Following cyclic nucleotide (c-di-GMP or cGAMP)-binding, activation and translocation from the endoplasmic reticulum, STING1 is phosphorylated by TBK1 at Ser-365 in the pLxIS motif. The phosphorylated pLxIS motif constitutes an IRF3-binding motif, leading to recruitment of the transcription factor IRF3 to induce type-I interferons and other cytokines. Phosphorylated on tyrosine residues upon MHC-II aggregation. Dephosphorylation by PPP6C leads to inactivation and decreased production of IFN-beta. Phosphorylation at Ser-357 is also required to activate IRF3. Phosphorylation at Ser-354 by MAP3K7/TAK1 facilitates its interaction with STEEP1, promoting STING1 translocation to COPII vesicles. Ubiquitinated. Ubiquitinated via 'Lys-63'-linked ubiquitin chains in response to double-stranded DNA treatment, leading to relocalization to autophagosomes and subsequent degradation; this process is dependent on SQSTM1. 'Lys-63'-linked ubiquitination mediated by TRIM56 at Lys-150 promotes homodimerization and recruitment of the antiviral kinase TBK1 and subsequent production of IFN-beta. 'Lys-48'-linked polyubiquitination at Lys-150 occurring after viral infection is mediated by RNF5 and leads to proteasomal degradation. 'Lys-11'-linked polyubiquitination at Lys-150 by RNF26 leads to stabilize STING1: it protects STING1 from RNF5-mediated 'Lys-48'-linked polyubiquitination. 'Lys-33'-linked and 'Lys-48'-linked deubiquitinated by USP20; leading to its stabilization and promotion of innate antiviral response. 'Lys-48'-linked deubiquitinated by USP44; leading to its stabilization and promotion of innate antiviral response. 'Lys-63'-linked deubiquitinated by USP49; leading to inhibition of the subsequent recruitment of TBK1 to the signaling complex. 'Lys-63'-linked ubiquitination mediated by RNF39 promotes the activation of the cGAS-STING pathway. Post-translationally, palmitoylation takes place in the Golgi apparatus and creates a platform for the recruitment of TBK1.

It is found in the endoplasmic reticulum membrane. Its subcellular location is the cytoplasm. It localises to the perinuclear region. The protein resides in the endoplasmic reticulum-Golgi intermediate compartment membrane. The protein localises to the golgi apparatus membrane. It is found in the cytoplasmic vesicle. Its subcellular location is the autophagosome membrane. It localises to the mitochondrion outer membrane. The protein resides in the cell membrane. The catalysed reaction is H(+)(in) = H(+)(out). Its function is as follows. Facilitator of innate immune signaling that acts as a sensor of cytosolic DNA from bacteria and viruses and promotes the production of type I interferon (IFN-alpha and IFN-beta). Innate immune response is triggered in response to non-CpG double-stranded DNA from viruses and bacteria delivered to the cytoplasm. Acts by binding cyclic dinucleotides: recognizes and binds cyclic di-GMP (c-di-GMP), a second messenger produced by bacteria, cyclic UMP-AMP (2',3'-cUAMP), and cyclic GMP-AMP (cGAMP), a messenger produced by CGAS in response to DNA virus in the cytosol. Upon binding to c-di-GMP or cGAMP, STING oligomerizes, translocates from the endoplasmic reticulum and is phosphorylated by TBK1 on the pLxIS motif, leading to recruitment and subsequent activation of the transcription factor IRF3 to induce expression of type I interferon and exert a potent anti-viral state. Exhibits 2',3' phosphodiester linkage-specific ligand recognition: can bind both 2'-3' linked cGAMP (2'-3'-cGAMP) and 3'-3' linked cGAMP but is preferentially activated by 2'-3' linked cGAMP. The preference for 2'-3'-cGAMP, compared to other linkage isomers is probably due to the ligand itself, whichs adopts an organized free-ligand conformation that resembles the STING1-bound conformation and pays low energy costs in changing into the active conformation. In addition to promote the production of type I interferons, plays a direct role in autophagy. Following cGAMP-binding, STING1 buds from the endoplasmic reticulum into COPII vesicles, which then form the endoplasmic reticulum-Golgi intermediate compartment (ERGIC). The ERGIC serves as the membrane source for WIPI2 recruitment and LC3 lipidation, leading to formation of autophagosomes that target cytosolic DNA or DNA viruses for degradation by the lysosome. Promotes autophagy by acting as a proton channel that directs proton efflux from the Golgi to facilitate MAP1LC3B/LC3B lipidation. The autophagy- and interferon-inducing activities can be uncoupled and autophagy induction is independent of TBK1 phosphorylation. Autophagy is also triggered upon infection by bacteria: following c-di-GMP-binding, which is produced by live Gram-positive bacteria, promotes reticulophagy. May be involved in translocon function, the translocon possibly being able to influence the induction of type I interferons. May be involved in transduction of apoptotic signals via its association with the major histocompatibility complex class II (MHC-II). In Bos taurus (Bovine), this protein is Stimulator of interferon genes protein.